A 510-amino-acid polypeptide reads, in one-letter code: Probable allantoinase 2 (510 aa).

6 residues coordinate Zn(2+): His-97, His-99, Lys-185, His-228, His-287, and Asp-360. Position 185 is an N6-carboxylysine (Lys-185).

Belongs to the metallo-dependent hydrolases superfamily. Allantoinase family. Homotetramer. Zn(2+) is required as a cofactor. Carboxylation allows a single lysine to coordinate two zinc ions.

It catalyses the reaction (S)-allantoin + H2O = allantoate + H(+). The protein operates within nitrogen metabolism; (S)-allantoin degradation; allantoate from (S)-allantoin: step 1/1. This Dictyostelium discoideum (Social amoeba) protein is Probable allantoinase 2 (allB2).